Reading from the N-terminus, the 430-residue chain is NAD(P)(+) glycohydrolase toxin Tse6 (430 aa).

The next 3 helical transmembrane spans lie at Phe17–Val37, Leu46–Val66, and Leu193–Leu213.

In terms of assembly, interacts with Tsi6, VgrG1a, EagT6 and EF-Tu.

It is found in the membrane. It carries out the reaction NAD(+) + H2O = ADP-D-ribose + nicotinamide + H(+). In terms of biological role, type VI secretion exported toxin that acts as a glycohydrolase on bacterial target cells and degrades the essential dinucleotides NAD(+) and NADP(+), thereby inducing bacteriostasis. The activity resides in the C-terminal region that is initially neutralized by the cognate immunity protein Tsi6. This is NAD(P)(+) glycohydrolase toxin Tse6 from Pseudomonas aeruginosa (strain ATCC 15692 / DSM 22644 / CIP 104116 / JCM 14847 / LMG 12228 / 1C / PRS 101 / PAO1).